A 307-amino-acid polypeptide reads, in one-letter code: GTPase Era (307 aa).

The 170-residue stretch at 17–186 (RCGFVAIVGR…LELIKPYLPE (170 aa)) folds into the Era-type G domain. Residues 25–32 (GRPNVGKS) are G1. 25 to 32 (GRPNVGKS) lines the GTP pocket. Residues 51–55 (QTTRN) are G2. A G3 region spans residues 72 to 75 (DTPG). GTP is bound by residues 72–76 (DTPGF) and 133–136 (NKID). The G4 stretch occupies residues 133–136 (NKID). A G5 region spans residues 165-167 (VSA). The KH type-2 domain occupies 217 to 293 (LGEELPYAMN…FLKVWVKVKS (77 aa)).

The protein belongs to the TRAFAC class TrmE-Era-EngA-EngB-Septin-like GTPase superfamily. Era GTPase family. In terms of assembly, monomer.

It localises to the cytoplasm. It is found in the cell inner membrane. Its function is as follows. An essential GTPase that binds both GDP and GTP, with rapid nucleotide exchange. Plays a role in 16S rRNA processing and 30S ribosomal subunit biogenesis and possibly also in cell cycle regulation and energy metabolism. The polypeptide is GTPase Era (Neisseria meningitidis serogroup B (strain ATCC BAA-335 / MC58)).